A 345-amino-acid polypeptide reads, in one-letter code: Nuclear hormone receptor family nhr-176 (345 aa).

A DNA-binding region (nuclear receptor) is located at residues 7 to 82 (IQPCLVCGQS…AGMLEKMVFS (76 aa)). The segment at 10–30 (CLVCGQSSNSILFGAPSCRAC) adopts an NR C4-type zinc-finger fold. The NR C4-type; degenerate zinc finger occupies 46–65 (NNCLGECSFAKKSMKPCQSC). Residues 92–342 (FEKSILEELE…CPLYAISTNS (251 aa)) form the NR LBD domain. The interval 331 to 342 (SGCPLYAISTNS) is AF-2.

It is found in the nucleus. Functionally, nuclear hormone receptor. Binds to xenobiotic ligand thiabendazole (TBZ), in vitro. Involved in the up-regulation of phase I detoxification genes, such as probable cytochrome P450 cyp-35d1, in response to TBZ. This chain is Nuclear hormone receptor family nhr-176, found in Caenorhabditis elegans.